Here is a 215-residue protein sequence, read N- to C-terminus: LexA repressor (215 aa).

The segment at residues 28–48 is a DNA-binding region (H-T-H motif); it reads RAEIAAELGFSSPNAAEEHLR. Active-site for autocatalytic cleavage activity residues include serine 133 and lysine 170.

It belongs to the peptidase S24 family. Homodimer.

It catalyses the reaction Hydrolysis of Ala-|-Gly bond in repressor LexA.. Represses a number of genes involved in the response to DNA damage (SOS response), including recA and lexA. In the presence of single-stranded DNA, RecA interacts with LexA causing an autocatalytic cleavage which disrupts the DNA-binding part of LexA, leading to derepression of the SOS regulon and eventually DNA repair. This chain is LexA repressor, found in Burkholderia mallei (strain NCTC 10247).